The sequence spans 242 residues: 1-(5-phosphoribosyl)-5-[(5-phosphoribosylamino)methylideneamino] imidazole-4-carboxamide isomerase (242 aa).

The active-site Proton acceptor is aspartate 10. The active-site Proton donor is aspartate 132.

The protein belongs to the HisA/HisF family.

The protein localises to the cytoplasm. It catalyses the reaction 1-(5-phospho-beta-D-ribosyl)-5-[(5-phospho-beta-D-ribosylamino)methylideneamino]imidazole-4-carboxamide = 5-[(5-phospho-1-deoxy-D-ribulos-1-ylimino)methylamino]-1-(5-phospho-beta-D-ribosyl)imidazole-4-carboxamide. Its pathway is amino-acid biosynthesis; L-histidine biosynthesis; L-histidine from 5-phospho-alpha-D-ribose 1-diphosphate: step 4/9. This Methanopyrus kandleri (strain AV19 / DSM 6324 / JCM 9639 / NBRC 100938) protein is 1-(5-phosphoribosyl)-5-[(5-phosphoribosylamino)methylideneamino] imidazole-4-carboxamide isomerase.